The primary structure comprises 232 residues: MEEKKSKVILHGTWISTYSKRVEIALKLKGVLYEYLEEDLQNKSESLIQLNPVHKKIPVLVHDGKPVAESLVILEYIDETWTNSPRFFPEDPYERAQVRFWVSYINQQVFEVMGQVMSQEGEAQAKSVEEARKRFKVLDEGLKKHFPNKNIRRNDDVGLLEITIIATLGGYKAHREAIGVDIIGPVNTPTLYNWIERLQDLSVIKEVEVPHDTLVTFIQKYRQKCLQQAANA.

The GST N-terminal domain maps to 6–85 (SKVILHGTWI…YIDETWTNSP (80 aa)). Glutathione contacts are provided by residues 16-17 (ST), 42-43 (NK), 56-57 (KI), and 69-70 (ES). The 136-residue stretch at 91–226 (DPYERAQVRF…FIQKYRQKCL (136 aa)) folds into the GST C-terminal domain.

This sequence belongs to the GST superfamily. Tau family.

The protein resides in the cytoplasm. It is found in the cytosol. The catalysed reaction is RX + glutathione = an S-substituted glutathione + a halide anion + H(+). Its function is as follows. May be involved in the conjugation of reduced glutathione to a wide number of exogenous and endogenous hydrophobic electrophiles and have a detoxification role against certain herbicides. The polypeptide is Glutathione S-transferase U10 (GSTU10) (Arabidopsis thaliana (Mouse-ear cress)).